We begin with the raw amino-acid sequence, 235 residues long: Vacuolar protein sorting-associated protein 60.1 (235 aa).

The segment at 1–29 (MRRVFGAKKNTEPPPSIQDASDRINKRGD) is disordered. Residues 20-29 (ASDRINKRGD) show a composition bias toward basic and acidic residues. Residues 99–148 (LKDAQQTMTALKSANKELKGMMKTVKIQDIDNLQDEMMDLMDVSSEIQES) are a coiled coil. Positions 175 to 235 (MGNETEADGM…PAVPRASLRG (61 aa)) are disordered.

This sequence belongs to the SNF7 family. In terms of assembly, interacts with SKD1/VPS4 and LIP5. Interacts with VPS2.2.

The protein localises to the endosome. Its subcellular location is the multivesicular body membrane. Probable peripherally associated component of the endosomal sorting required for transport complex III (ESCRT-III) which is involved in multivesicular bodies (MVBs) formation and sorting of endosomal cargo proteins into MVBs. The polypeptide is Vacuolar protein sorting-associated protein 60.1 (Arabidopsis thaliana (Mouse-ear cress)).